A 140-amino-acid chain; its full sequence is 3-hydroxyacyl-[acyl-carrier-protein] dehydratase FabZ (140 aa).

His-47 is a catalytic residue.

This sequence belongs to the thioester dehydratase family. FabZ subfamily.

The protein localises to the cytoplasm. The catalysed reaction is a (3R)-hydroxyacyl-[ACP] = a (2E)-enoyl-[ACP] + H2O. Functionally, involved in unsaturated fatty acids biosynthesis. Catalyzes the dehydration of short chain beta-hydroxyacyl-ACPs and long chain saturated and unsaturated beta-hydroxyacyl-ACPs. This chain is 3-hydroxyacyl-[acyl-carrier-protein] dehydratase FabZ, found in Streptococcus suis (strain 98HAH33).